A 359-amino-acid polypeptide reads, in one-letter code: Type II restriction enzyme HgiDI (359 aa).

It carries out the reaction Endonucleolytic cleavage of DNA to give specific double-stranded fragments with terminal 5'-phosphates.. Functionally, a P subtype restriction enzyme that recognizes the double-stranded sequence 5'-GRCGYC-3' and cleaves after R-2. The chain is Type II restriction enzyme HgiDI from Herpetosiphon aurantiacus (Herpetosiphon giganteus).